The chain runs to 647 residues: Dihydrolipoyllysine-residue acetyltransferase component of pyruvate dehydrogenase complex (647 aa).

Residues 1-86 (MWRVCARRAQ…LWGSPSRRWY (86 aa)) constitute a mitochondrion transit peptide. In terms of domain architecture, Lipoyl-binding 1 spans 91–167 (HQKVPLPSLS…PVGAIICITV (77 aa)). Ser-100 carries the phosphoserine modification. Lys-132 carries the N6-lipoyllysine modification. The segment at 184 to 216 (SAAPAPPAAPAPTPAAPAPSPTPSAQAPGSSYP) is disordered. Positions 187-205 (PAPPAAPAPTPAAPAPSPT) are enriched in pro residues. A Lipoyl-binding 2 domain is found at 218–294 (HMQVLLPALS…PLGTPLCIIV (77 aa)). At Lys-259 the chain carries N6-lipoyllysine. The disordered stretch occupies residues 311–352 (VTDLKPPAPPPIPSPAAPVPPAPQPVAPPPSAPRPAAPAGPK). Residues 316–348 (PPAPPPIPSPAAPVPPAPQPVAPPPSAPRPAAP) show a composition bias toward pro residues. Residues 356–393 (FVSPLAKKLAAEKGIDLTQVKGTGPDGRIIKKDIDSFV) form the Peripheral subunit-binding (PSBD) domain. Arg-461 contacts CoA. Position 466 is an N6-acetyllysine (Lys-466). Lys-473 is subject to N6-succinyllysine. Ser-475 is a CoA binding site. Lys-547 is modified (N6-succinyllysine). The CoA site is built by Ser-566, Asn-567, and Gly-591. Residues His-620 and Asp-624 contribute to the active site.

Belongs to the 2-oxoacid dehydrogenase family. In terms of assembly, part of the pyruvate dehydrogenase complex (PDHc) that is a multi-enzyme complex composed of multiple copies of three enzymes, pyruvate dehydrogenase (subunits PDH1A and PDHB, E1 component), dihydrolipoamide acetyltransferase (DLAT, E2 component), and dihydrolipoamide dehydrogenase (DLD, E3 component) to which is added an additional protein the E3-binding protein (PDHX, E3BP). In terms of structural architecture, the E2 and E3BP components assemble into a 60meric central core with icosahedral symmetry. The central core is decorated with E1 and E3 proteins. Currently, two alternative models for the E2:E3BP stoichiometry are considered as being either 48:12 (E2(48)-E3BP(12)) or 40:20 (E2(40)-E3BP(20)). Interacts with PDK2 and PDK3. Interacts with SIRT4. Interacts with PDHB. (R)-lipoate serves as cofactor. In terms of processing, delipoylated at Lys-132 and Lys-259 by SIRT4, delipoylation decreases the PHD complex activity.

Its subcellular location is the mitochondrion matrix. The enzyme catalyses N(6)-[(R)-dihydrolipoyl]-L-lysyl-[protein] + acetyl-CoA = N(6)-[(R)-S(8)-acetyldihydrolipoyl]-L-lysyl-[protein] + CoA. Functionally, as part of the pyruvate dehydrogenase complex, catalyzes the transfers of an acetyl group to a lipoic acid moiety. The pyruvate dehydrogenase complex, catalyzes the overall conversion of pyruvate to acetyl-CoA and CO(2), and thereby links cytoplasmic glycolysis and the mitochondrial tricarboxylic acid (TCA) cycle. In Bos taurus (Bovine), this protein is Dihydrolipoyllysine-residue acetyltransferase component of pyruvate dehydrogenase complex.